The sequence spans 122 residues: Large ribosomal subunit protein uL14c (122 aa).

It belongs to the universal ribosomal protein uL14 family. As to quaternary structure, part of the 50S ribosomal subunit.

It is found in the plastid. The protein localises to the chloroplast. Its function is as follows. Binds to 23S rRNA. This is Large ribosomal subunit protein uL14c from Zygnema circumcarinatum (Green alga).